Here is a 213-residue protein sequence, read N- to C-terminus: Uridine kinase (213 aa).

15 to 22 (GASASGKS) lines the ATP pocket.

This sequence belongs to the uridine kinase family.

Its subcellular location is the cytoplasm. It catalyses the reaction uridine + ATP = UMP + ADP + H(+). It carries out the reaction cytidine + ATP = CMP + ADP + H(+). It participates in pyrimidine metabolism; CTP biosynthesis via salvage pathway; CTP from cytidine: step 1/3. It functions in the pathway pyrimidine metabolism; UMP biosynthesis via salvage pathway; UMP from uridine: step 1/1. The sequence is that of Uridine kinase from Proteus mirabilis (strain HI4320).